Here is a 227-residue protein sequence, read N- to C-terminus: Potassium/proton antiporter CemA (227 aa).

4 consecutive transmembrane segments (helical) span residues 5-25, 112-132, 143-163, and 187-207; these read SISL…SFTF, IICF…LILI, LSDT…IGFH, and IISG…KYWI.

The protein belongs to the CemA family.

It is found in the plastid. It localises to the chloroplast inner membrane. It carries out the reaction K(+)(in) + H(+)(out) = K(+)(out) + H(+)(in). Its function is as follows. Contributes to K(+)/H(+) antiport activity by supporting proton efflux to control proton extrusion and homeostasis in chloroplasts in a light-dependent manner to modulate photosynthesis. Prevents excessive induction of non-photochemical quenching (NPQ) under continuous-light conditions. Indirectly promotes efficient inorganic carbon uptake into chloroplasts. The protein is Potassium/proton antiporter CemA of Phaseolus vulgaris (Kidney bean).